A 290-amino-acid polypeptide reads, in one-letter code: Xyloglucan endotransglucosylase/hydrolase protein 3 (290 aa).

A signal peptide spans 1 to 21 (MDYMRIFSVFVVTLWIIRVDA). The GH16 domain occupies 22–220 (RVFGGRGIEK…WSYSPFIAHF (199 aa)). Residue glutamate 109 is the Nucleophile of the active site. Residue glutamate 113 is the Proton donor of the active site. Xyloglucan contacts are provided by residues glutamate 113, 126 to 128 (QTN), 136 to 138 (NRE), 199 to 200 (DW), and glycine 204. A glycan (N-linked (GlcNAc...) asparagine) is linked at asparagine 210. 2 disulfides stabilise this stretch: cysteine 228–cysteine 240 and cysteine 276–cysteine 289.

Belongs to the glycosyl hydrolase 16 family. XTH group 1 subfamily. In terms of processing, contains at least one intrachain disulfide bond essential for its enzymatic activity. Predominantly expressed in flower buds.

It is found in the secreted. Its subcellular location is the cell wall. It localises to the extracellular space. The protein resides in the apoplast. The catalysed reaction is breaks a beta-(1-&gt;4) bond in the backbone of a xyloglucan and transfers the xyloglucanyl segment on to O-4 of the non-reducing terminal glucose residue of an acceptor, which can be a xyloglucan or an oligosaccharide of xyloglucan.. Functionally, catalyzes xyloglucan endohydrolysis (XEH) and/or endotransglycosylation (XET). Cleaves and religates xyloglucan polymers, an essential constituent of the primary cell wall, and thereby participates in cell wall construction of growing tissues. The polypeptide is Xyloglucan endotransglucosylase/hydrolase protein 3 (XTH3) (Arabidopsis thaliana (Mouse-ear cress)).